Reading from the N-terminus, the 315-residue chain is Atrochrysone carboxyl ACP thioesterase (315 aa).

Histidine 95, histidine 97, aspartate 99, and histidine 100 together coordinate Zn(2+). The active-site Proton donor/acceptor is the aspartate 99.

Belongs to the metallo-beta-lactamase superfamily. Zn(2+) is required as a cofactor. As to expression, endocrocin is specifically produced in conidia.

The catalysed reaction is atrochrysone carboxyl-[ACP] + H2O = atrochrysone carboxylate + holo-[ACP] + H(+). Its function is as follows. Atrochrysone carboxyl ACP thioesterase; part of the gene cluster that mediates the biosynthesis of endocrocin, a simple anthraquinone interesting for many biotechnological applications. The pathway begins with the synthesis of atrochrysone thioester by the polyketide synthase (PKS) encA. The atrochrysone carboxyl ACP thioesterase encB then breaks the thioester bond and releases the atrochrysone carboxylic acid from encA. The atrochrysone carboxylic acid is then converted to endocrocin anthrone which is further oxidized into endocrocin by the anthrone oxygenase encC. The exact function of encD has not been identified yet, but it negatively regulates endocrocin production, likely through the modification of endocrocin itself. The chain is Atrochrysone carboxyl ACP thioesterase from Aspergillus fumigatus (strain ATCC MYA-4609 / CBS 101355 / FGSC A1100 / Af293) (Neosartorya fumigata).